A 77-amino-acid chain; its full sequence is DNA-directed RNA polymerase subunit Rpo5 (77 aa).

It belongs to the archaeal Rpo5/eukaryotic RPB5 RNA polymerase subunit family. In terms of assembly, part of the RNA polymerase complex.

It localises to the cytoplasm. The enzyme catalyses RNA(n) + a ribonucleoside 5'-triphosphate = RNA(n+1) + diphosphate. DNA-dependent RNA polymerase (RNAP) catalyzes the transcription of DNA into RNA using the four ribonucleoside triphosphates as substrates. This Methanothermobacter thermautotrophicus (strain ATCC 29096 / DSM 1053 / JCM 10044 / NBRC 100330 / Delta H) (Methanobacterium thermoautotrophicum) protein is DNA-directed RNA polymerase subunit Rpo5.